The sequence spans 169 residues: NAD(P)H-quinone oxidoreductase subunit J, chloroplastic (169 aa).

The protein belongs to the complex I 30 kDa subunit family. In terms of assembly, NDH is composed of at least 16 different subunits, 5 of which are encoded in the nucleus.

The protein resides in the plastid. It is found in the chloroplast thylakoid membrane. It catalyses the reaction a plastoquinone + NADH + (n+1) H(+)(in) = a plastoquinol + NAD(+) + n H(+)(out). The catalysed reaction is a plastoquinone + NADPH + (n+1) H(+)(in) = a plastoquinol + NADP(+) + n H(+)(out). In terms of biological role, NDH shuttles electrons from NAD(P)H:plastoquinone, via FMN and iron-sulfur (Fe-S) centers, to quinones in the photosynthetic chain and possibly in a chloroplast respiratory chain. The immediate electron acceptor for the enzyme in this species is believed to be plastoquinone. Couples the redox reaction to proton translocation, and thus conserves the redox energy in a proton gradient. The sequence is that of NAD(P)H-quinone oxidoreductase subunit J, chloroplastic from Physcomitrium patens (Spreading-leaved earth moss).